Here is a 161-residue protein sequence, read N- to C-terminus: Bacterioferritin (161 aa).

A Ferritin-like diiron domain is found at 1–145 (MKGEPKVIER…TQLDLLAKIG (145 aa)). Fe cation contacts are provided by E18 and E51. M52 lines the heme b pocket. The Fe cation site is built by H54, E94, E127, and H130.

The protein belongs to the bacterioferritin family. In terms of assembly, homooligomer of 24 subunits, arranged as 12 dimers, that are packed together to form an approximately spherical molecule with a central cavity, in which large amounts of iron can be deposited. Heme b serves as cofactor.

The enzyme catalyses 4 Fe(2+) + O2 + 4 H(+) = 4 Fe(3+) + 2 H2O. It catalyses the reaction Fe(2+)(in) = Fe(2+)(out). Functionally, iron-storage protein, whose ferroxidase center binds Fe(2+), oxidizes it using dioxygen to Fe(3+), and participates in the subsequent Fe(3+) oxide mineral core formation within the central cavity of the BFR protein shell. This is Bacterioferritin (bfr) from Brucella melitensis biotype 1 (strain ATCC 23456 / CCUG 17765 / NCTC 10094 / 16M).